The primary structure comprises 335 residues: tRNA N6-adenosine threonylcarbamoyltransferase (335 aa).

The Fe cation site is built by His111, His115, and Tyr132. Substrate-binding positions include 132 to 136 (YVSGG), Asp164, Gly177, Glu181, and Asn260. Asp288 contacts Fe cation.

It belongs to the KAE1 / TsaD family. Monomer. Component of the KEOPS complex that consists of Kae1, Bud32, Cgi121 and Pcc1; the whole complex dimerizes. Requires Fe(2+) as cofactor.

The protein localises to the cytoplasm. It catalyses the reaction L-threonylcarbamoyladenylate + adenosine(37) in tRNA = N(6)-L-threonylcarbamoyladenosine(37) in tRNA + AMP + H(+). Required for the formation of a threonylcarbamoyl group on adenosine at position 37 (t(6)A37) in tRNAs that read codons beginning with adenine. Is a component of the KEOPS complex that is probably involved in the transfer of the threonylcarbamoyl moiety of threonylcarbamoyl-AMP (TC-AMP) to the N6 group of A37. Kae1 likely plays a direct catalytic role in this reaction, but requires other protein(s) of the complex to fulfill this activity. The sequence is that of tRNA N6-adenosine threonylcarbamoyltransferase from Methanococcoides burtonii (strain DSM 6242 / NBRC 107633 / OCM 468 / ACE-M).